The chain runs to 179 residues: Iron sulfur cluster assembly protein 1, mitochondrial (179 aa).

A disordered region spans residues 160 to 179; sequence RSVKQPTLGPEAAQAETIAT.

This sequence belongs to the NifU family. In terms of assembly, component of the core Fe-S cluster (ISC) assembly machinery. Requires [2Fe-2S] cluster as cofactor.

It is found in the mitochondrion matrix. Its pathway is cofactor biosynthesis; iron-sulfur cluster biosynthesis. In terms of biological role, scaffold protein for the de novo synthesis of iron-sulfur (Fe-S) clusters within mitochondria, which is required for maturation of both mitochondrial and cytoplasmic [2Fe-2S] and [4Fe-4S] proteins. First, a [2Fe-2S] cluster is transiently assembled on the scaffold protein ISU1. In a second step, the cluster is released from ISU1, transferred to a glutaredoxin, followed by the formation of mitochondrial [2Fe-2S] proteins, the synthesis of [4Fe-4S] clusters and their target-specific insertion into the recipient apoproteins. Cluster assembly on ISU1 depends on the function of the cysteine desulfurase complex NFS1-ISD11, which serves as the sulfur donor for cluster synthesis, the iron-binding protein frataxin as the putative iron donor, and the electron transfer chain comprised of ferredoxin reductase and ferredoxin, which receive their electrons from NADH. The protein is Iron sulfur cluster assembly protein 1, mitochondrial (ISU1) of Debaryomyces hansenii (strain ATCC 36239 / CBS 767 / BCRC 21394 / JCM 1990 / NBRC 0083 / IGC 2968) (Yeast).